Reading from the N-terminus, the 495-residue chain is Probable lysine-specific demethylase 4A (495 aa).

The 43-residue stretch at 18–60 folds into the JmjN domain; sequence IMTFRPSYEEFQNFSAYIEYIESRGAHLAGLAKIQPPAEWVPR. Tyr-139 contributes to the 2-oxoglutarate binding site. In terms of domain architecture, JmjC spans 149–315; that stretch reads DEDLDVWNIG…YGKRASICRC (167 aa). The Fe cation site is built by His-195 and Glu-197. Asn-205 and Lys-213 together coordinate 2-oxoglutarate. Cys-241 and His-247 together coordinate Zn(2+). Residue Lys-248 coordinates 2-oxoglutarate. His-283 contacts Fe cation. Zn(2+) is bound by residues Cys-313 and Cys-315. At Ser-409 the chain carries Phosphoserine.

This sequence belongs to the JHDM3 histone demethylase family. Fe(2+) serves as cofactor.

The protein resides in the nucleus. The catalysed reaction is N(6),N(6),N(6)-trimethyl-L-lysyl(9)-[histone H3] + 2 2-oxoglutarate + 2 O2 = N(6)-methyl-L-lysyl(9)-[histone H3] + 2 formaldehyde + 2 succinate + 2 CO2. It catalyses the reaction N(6),N(6),N(6)-trimethyl-L-lysyl(36)-[histone H3] + 2 2-oxoglutarate + 2 O2 = N(6)-methyl-L-lysyl(36)-[histone H3] + 2 formaldehyde + 2 succinate + 2 CO2. Probable histone demethylase that specifically demethylates 'Lys-9' and 'Lys-36' residues of histone H3, thereby playing a central role in histone code. Demethylation of Lys residue generates formaldehyde and succinate. The polypeptide is Probable lysine-specific demethylase 4A (Kdm4A) (Drosophila melanogaster (Fruit fly)).